The sequence spans 360 residues: Vignain (360 aa).

An N-terminal signal peptide occupies residues 1 to 20; it reads MQKFILLALSLALVLAITES. A propeptide spans 21–124 (activation peptide); it reads FDFHEKELES…NGTFMYEKVD (104 aa). An N-linked (GlcNAc...) asparagine glycan is attached at Asn-115. 3 cysteine pairs are disulfide-bonded: Cys-147–Cys-189, Cys-181–Cys-222, and Cys-280–Cys-332. Cys-150 is a catalytic residue. Catalysis depends on residues His-286 and Asn-307. The tract at residues 341 to 360 is disordered; it reads PIKKSSNNPSGIKSSPKDEL. Positions 344-353 are enriched in polar residues; it reads KSSNNPSGIK. Positions 354–360 are cleaved as a propeptide — removed in mature form; it reads SSPKDEL. The prevents secretion from ER stretch occupies residues 357-360; the sequence is KDEL.

It belongs to the peptidase C1 family. In terms of processing, the potential N-glycosylation site at Asn-115 is not glycosylated.

Its subcellular location is the cytoplasmic vesicle. With respect to regulation, low pH triggers activation of the protease and removal of the propeptide and the KDEL motif. Its function is as follows. Involved in programmed cell death. Shows a pronounced preference for hydrophobic residues in the P2 position and no obvious preference in the P1 position of the cleavage site. Accepts proline at the P1 and P1' positions. The polypeptide is Vignain (CYSEP) (Ricinus communis (Castor bean)).